We begin with the raw amino-acid sequence, 573 residues long: 2-isopropylmalate synthase (573 aa).

The Pyruvate carboxyltransferase domain occupies P37–D314. 4 residues coordinate Mg(2+): D46, H253, H255, and N289. Positions N456–R573 are regulatory domain.

Belongs to the alpha-IPM synthase/homocitrate synthase family. LeuA type 2 subfamily. Homodimer. It depends on Mg(2+) as a cofactor.

The protein localises to the cytoplasm. The catalysed reaction is 3-methyl-2-oxobutanoate + acetyl-CoA + H2O = (2S)-2-isopropylmalate + CoA + H(+). Its pathway is amino-acid biosynthesis; L-leucine biosynthesis; L-leucine from 3-methyl-2-oxobutanoate: step 1/4. In terms of biological role, catalyzes the condensation of the acetyl group of acetyl-CoA with 3-methyl-2-oxobutanoate (2-ketoisovalerate) to form 3-carboxy-3-hydroxy-4-methylpentanoate (2-isopropylmalate). The protein is 2-isopropylmalate synthase of Streptomyces coelicolor (strain ATCC BAA-471 / A3(2) / M145).